The chain runs to 529 residues: Transcription activator of gluconeogenesis ERT1 (529 aa).

The segment at 1–31 (MCTPDENDYKTSTDPDTSANTNHTLEKKKRK) is disordered. The segment covering 14-23 (DPDTSANTNH) has biased composition (polar residues). The zn(2)-C6 fungal-type DNA-binding region spans 40–68 (CVNCSRLHVSCEAKRPCLRCISKGLTATC). Residues 174-193 (SNSTIGNSSNNSPTGTNTSP) are compositionally biased toward low complexity. Residues 174-198 (SNSTIGNSSNNSPTGTNTSPEETEM) are disordered. The region spanning 408–480 (TLLEYVKFIA…KTLSKVAYRD (73 aa)) is the PAS domain.

The protein belongs to the ERT1/acuK family.

Its subcellular location is the cytoplasm. The protein localises to the nucleus. Its function is as follows. Transcription factor which regulates nonfermentable carbon utilization. Activator of gluconeogenetic genes like PCK1. Involved in restriction of Ty1 transposition. The polypeptide is Transcription activator of gluconeogenesis ERT1 (ERT1) (Saccharomyces cerevisiae (strain ATCC 204508 / S288c) (Baker's yeast)).